The primary structure comprises 150 residues: UPF0102 protein sll0189 (150 aa).

It belongs to the UPF0102 family.

In Synechocystis sp. (strain ATCC 27184 / PCC 6803 / Kazusa), this protein is UPF0102 protein sll0189.